Here is a 100-residue protein sequence, read N- to C-terminus: Urease subunit gamma (100 aa).

Belongs to the urease gamma subunit family. In terms of assembly, heterotrimer of UreA (gamma), UreB (beta) and UreC (alpha) subunits. Three heterotrimers associate to form the active enzyme.

It is found in the cytoplasm. It catalyses the reaction urea + 2 H2O + H(+) = hydrogencarbonate + 2 NH4(+). It participates in nitrogen metabolism; urea degradation; CO(2) and NH(3) from urea (urease route): step 1/1. The chain is Urease subunit gamma from Haemophilus influenzae (strain ATCC 51907 / DSM 11121 / KW20 / Rd).